The chain runs to 351 residues: DNA polymerase IV (351 aa).

The 182-residue stretch at 4-185 folds into the UmuC domain; sequence IIHVDMDCFF…LPLAKIPGVG (182 aa). Residues D8 and D103 each coordinate Mg(2+). E104 is a catalytic residue.

It belongs to the DNA polymerase type-Y family. As to quaternary structure, monomer. It depends on Mg(2+) as a cofactor.

Its subcellular location is the cytoplasm. The enzyme catalyses DNA(n) + a 2'-deoxyribonucleoside 5'-triphosphate = DNA(n+1) + diphosphate. In terms of biological role, poorly processive, error-prone DNA polymerase involved in untargeted mutagenesis. Copies undamaged DNA at stalled replication forks, which arise in vivo from mismatched or misaligned primer ends. These misaligned primers can be extended by PolIV. Exhibits no 3'-5' exonuclease (proofreading) activity. May be involved in translesional synthesis, in conjunction with the beta clamp from PolIII. The chain is DNA polymerase IV from Salmonella choleraesuis (strain SC-B67).